Reading from the N-terminus, the 787-residue chain is Lysine-specific demethylase JMJ13 (787 aa).

Residues 103–144 (CPVYRPTKEEFEDPLTYLQKIFPEASKYGICKIVSPLTATVP) enclose the JmjN domain. The JmjC domain occupies 250–420 (SSKWNLNKVS…FGAIASCRYA (171 aa)). Fe cation is bound by residues histidine 293, glutamate 295, and histidine 388. Zn(2+) is bound by residues cysteine 500, cysteine 503, cysteine 514, cysteine 516, histidine 519, cysteine 522, histidine 525, and cysteine 534. The C4HCHC zinc finger occupies 500–551 (CSLCKRDCYLAFINCECYSHPVCLRHDVKKLDLPCGTTHTLYLRDNIEDMEA). The segment at 500–551 (CSLCKRDCYLAFINCECYSHPVCLRHDVKKLDLPCGTTHTLYLRDNIEDMEA) adopts a C5HC2 zinc-finger fold. Residues 617–675 (VMSYEANASCISSVADDYECSDYVNRRANCSSSSDSKLSEEVACSSSKKTRFFPVVQDE) form the FYR N-terminal domain. In terms of domain architecture, FYR C-terminal spans 677–756 (LVADQESDGS…ELVISNRKET (80 aa)). The segment at 712-769 (ESDHHQELKRLKKSHHHEGRYSSSSSVSRQEEEEDELVISNRKETQQQSDVKMQKKRI) is disordered. The Nuclear localization signal motif lies at 752 to 759 (NRKETQQQ).

Belongs to the JARID1 histone demethylase family. Requires Fe(2+) as cofactor. Mostly expressed in leaves, and, to a lower extent, in inflorescences, roots, siliques and stems.

It localises to the nucleus. The enzyme catalyses N(6),N(6),N(6)-trimethyl-L-lysyl(27)-[histone H3] + 2-oxoglutarate + O2 = N(6),N(6)-dimethyl-L-lysyl(27)-[histone H3] + formaldehyde + succinate + CO2. Histone demethylase that demethylates 'Lys-27' (H3K27me) of histone H3 with a specific activity for H3K27me3 and involved in the regulation of gene expression. Acts as a temperature and photoperiod dependent flowering repressor. The protein is Lysine-specific demethylase JMJ13 of Arabidopsis thaliana (Mouse-ear cress).